Reading from the N-terminus, the 618-residue chain is Proline--tRNA ligase (618 aa).

The protein belongs to the class-II aminoacyl-tRNA synthetase family. ProS type 1 subfamily. Homodimer.

The protein resides in the cytoplasm. It catalyses the reaction tRNA(Pro) + L-proline + ATP = L-prolyl-tRNA(Pro) + AMP + diphosphate. Its function is as follows. Catalyzes the attachment of proline to tRNA(Pro) in a two-step reaction: proline is first activated by ATP to form Pro-AMP and then transferred to the acceptor end of tRNA(Pro). As ProRS can inadvertently accommodate and process non-cognate amino acids such as alanine and cysteine, to avoid such errors it has two additional distinct editing activities against alanine. One activity is designated as 'pretransfer' editing and involves the tRNA(Pro)-independent hydrolysis of activated Ala-AMP. The other activity is designated 'posttransfer' editing and involves deacylation of mischarged Ala-tRNA(Pro). The misacylated Cys-tRNA(Pro) is not edited by ProRS. This chain is Proline--tRNA ligase, found in Streptococcus pyogenes serotype M1.